A 117-amino-acid polypeptide reads, in one-letter code: Large ribosomal subunit protein bL20c (117 aa).

The protein belongs to the bacterial ribosomal protein bL20 family.

The protein resides in the plastid. It is found in the chloroplast. In terms of biological role, binds directly to 23S ribosomal RNA and is necessary for the in vitro assembly process of the 50S ribosomal subunit. It is not involved in the protein synthesizing functions of that subunit. The protein is Large ribosomal subunit protein bL20c of Chloranthus spicatus (Chulantree).